Here is a 390-residue protein sequence, read N- to C-terminus: Chalcone synthase (390 aa).

Cys-164 is a catalytic residue.

It belongs to the thiolase-like superfamily. Chalcone/stilbene synthases family.

It catalyses the reaction (E)-4-coumaroyl-CoA + 3 malonyl-CoA + 3 H(+) = 2',4,4',6'-tetrahydroxychalcone + 3 CO2 + 4 CoA. It participates in secondary metabolite biosynthesis; flavonoid biosynthesis. The primary product of this enzyme is 4,2',4',6'-tetrahydroxychalcone (also termed naringenin-chalcone or chalcone) which undergoes enzyme-catalyzed or spontaneous isomerization into naringenin. This is Chalcone synthase from Hypericum androsaemum (Tutsan).